A 246-amino-acid polypeptide reads, in one-letter code: Chaperone protein SefB (246 aa).

A signal peptide spans 1 to 24 (MYILNKFIRRTVIFFFFCYLPIAS). C124 and C155 are disulfide-bonded.

Belongs to the periplasmic pilus chaperone family.

The protein resides in the periplasm. Functionally, required for the biogenesis of the SefA (SEF14) fimbria. The polypeptide is Chaperone protein SefB (sefB) (Salmonella enteritidis).